The following is a 378-amino-acid chain: Putative methyltransferase spot-1 (378 aa).

The protein belongs to the class IV-like SAM-binding methyltransferase superfamily.

The protein resides in the cytoplasm. Its subcellular location is the cytoskeleton. It localises to the spindle. The protein localises to the chromosome. It is found in the centromere. The protein resides in the kinetochore. Its subcellular location is the microtubule organizing center. It localises to the centrosome. Required for association of the centrosomes with the poles of the bipolar mitotic spindle during metaphase. In Caenorhabditis elegans, this protein is Putative methyltransferase spot-1.